The following is a 347-amino-acid chain: MLSPLIQSTLLMTLGLGTLVTFSSTSWILAWIGLEINTIAIIPLMAKTHHPRSIEATTKYFIAQSAGSATLLVTACLAAWHSGNWAISPSSDPIILNAMTLALMFKLGMAPMHFWLPEVMAGLDLTTGMILATWQKLAPITLLIQIAQDQNNAFILGPALLSVFVGGWGGLNQTQTRKIIAYSSIAHMGWIASMAPFNPTITWVTTLIYCLLTSTTFINLNTLKANKITALTMNKHNQISQMLLLLLLLSLGGLPPLTGFTNKLLASVELANQNLVIYLFMMMMGSLLSLFFYTRMCYLSIILSPPCPTTNLTLWRVTPNKPMALMTMLSINLFILTPQLMAIFIMY.

The next 11 helical transmembrane spans lie at 2 to 22, 26 to 46, 60 to 80, 94 to 114, 127 to 147, 151 to 171, 179 to 197, 201 to 223, 242 to 262, 274 to 294, and 325 to 345; these read LSPL…LVTF, SWIL…PLMA, YFIA…LAAW, IILN…PMHF, TGMI…IQIA, NNAF…WGGL, IIAY…MAPF, ITWV…LNTL, MLLL…GFTN, NLVI…FFYT, and LMTM…AIFI.

It belongs to the complex I subunit 2 family.

Its subcellular location is the mitochondrion inner membrane. The enzyme catalyses a ubiquinone + NADH + 5 H(+)(in) = a ubiquinol + NAD(+) + 4 H(+)(out). Its function is as follows. Core subunit of the mitochondrial membrane respiratory chain NADH dehydrogenase (Complex I) that is believed to belong to the minimal assembly required for catalysis. Complex I functions in the transfer of electrons from NADH to the respiratory chain. The immediate electron acceptor for the enzyme is believed to be ubiquinone. This is NADH-ubiquinone oxidoreductase chain 2 (MT-ND2) from Lampetra fluviatilis (European river lamprey).